Here is a 295-residue protein sequence, read N- to C-terminus: MSLKHFIQITKPGIIFGNVLSVAGGFFLASKGHVDLAVFLAAMIGTSLVVASGCVFNNCIDRDIDLKMERTKNRVLVQGLISLKLALVYATVLGVAGVALLYKVANPLAALFAVIGFIIYVGFYSLYLKRKSVHGTLVGSLSGAMPPVIGYVAVTNSFDMAALTLLVMFSLWQMPHSYAIAIFRFNDYLAASIPVLPVKRGIQVAKKHILIYILAFLVATLMLTFSGYAGMSYLAVAAAMGMYWLYMAWTGYKAVDDTVWARKLFVFSIFTITALSVMMSLDFKVPTELLLTYAP.

The next 9 helical transmembrane spans lie at isoleucine 9–alanine 29, leucine 36–phenylalanine 56, leucine 80–leucine 100, leucine 108–leucine 128, glycine 135–threonine 155, leucine 163–phenylalanine 183, isoleucine 209–alanine 229, glycine 230–threonine 250, and phenylalanine 265–valine 285.

Belongs to the UbiA prenyltransferase family. Protoheme IX farnesyltransferase subfamily.

It localises to the cell inner membrane. It carries out the reaction heme b + (2E,6E)-farnesyl diphosphate + H2O = Fe(II)-heme o + diphosphate. Its pathway is porphyrin-containing compound metabolism; heme O biosynthesis; heme O from protoheme: step 1/1. Converts heme B (protoheme IX) to heme O by substitution of the vinyl group on carbon 2 of heme B porphyrin ring with a hydroxyethyl farnesyl side group. This is Protoheme IX farnesyltransferase 2 from Pseudomonas fluorescens (strain Pf0-1).